Consider the following 1113-residue polypeptide: Lon protease homolog, mitochondrial (1113 aa).

A mitochondrion-targeting transit peptide spans 1 to 61 (MLRGQTLPWR…RAFSSSSIRR (61 aa)). The disordered stretch occupies residues 42–196 (SRLHRSLPTS…SGEKALQKPS (155 aa)). 3 stretches are compositionally biased toward basic and acidic residues: residues 64-99 (KPPP…RKAA), 124-143 (KAGA…KDGN), and 178-192 (DGGK…EKAL). In terms of domain architecture, Lon N-terminal spans 204-456 (VMAIPIAKRP…KALVVLKKEL (253 aa)). An ATP-binding site is contributed by 609 to 616 (GPPGVGKT). The segment covering 828–858 (LTDEGKAVQEESQKETESPDSKSPVDPEKST) has biased composition (basic and acidic residues). Residues 828 to 864 (LTDEGKAVQEESQKETESPDSKSPVDPEKSTTETPRV) are disordered. The 187-residue stretch at 898–1084 (TFPPGVTMGL…SEVFDLLFTD (187 aa)) folds into the Lon proteolytic domain. Catalysis depends on residues Ser-990 and Lys-1033.

It belongs to the peptidase S16 family. In terms of assembly, homohexamer or homoheptamer. Organized in a ring with a central cavity.

The protein localises to the mitochondrion matrix. It catalyses the reaction Hydrolysis of proteins in presence of ATP.. ATP-dependent serine protease that mediates the selective degradation of misfolded, unassembled or oxidatively damaged polypeptides as well as certain short-lived regulatory proteins in the mitochondrial matrix. May also have a chaperone function in the assembly of inner membrane protein complexes. Participates in the regulation of mitochondrial gene expression and in the maintenance of the integrity of the mitochondrial genome. Binds to mitochondrial DNA in a site-specific manner. This Aspergillus niger (strain ATCC MYA-4892 / CBS 513.88 / FGSC A1513) protein is Lon protease homolog, mitochondrial (pim1).